Here is a 746-residue protein sequence, read N- to C-terminus: MAPSYEHLREADLDEDEFDEDEVDVSDLREKFEVQLEQGFDTFVVIDGLPEVTEEQKPKLVKFLLKKLTSVGKTKEDMIDMPMGPDGKSLRFAFVEYSSPGEAAAAVRQLDRVPLDKKHTLRVNKLMDVDRFGREGRIDDEYQPPHIDEFHPRDHLRSFMADPSGRGRDQFVMFRGDHVGVFWNNEKDTPENIVDRPNWTESFVQWSPLGTYLLSMHMQGVQLWGGPKWDRLGRFPHPFVNMAAFSPQENYLVTWSNRPISIPDEGHPALSMDDDGKNYVIWDIATGKPLRSFANLDLPPDDPNKPPRKHPWPAFKWSSDDKYVARLTQGQSISVYELPRMNLLDKTTIKVEGVQDFEWAPSRPQRDGVKTYEQMFCYWTPEIGSNPAKVGLMSIPSKEVVRSLNLFSVSDVKLHWQSEGAYLCVKVDRHSKSKKSQATTLEIFRVKEKGVPVEVVDTIKDTVINFAWEPKGDRFLIITTVTPTGEVAVQPKTAISFFCPEKSKGSTVGNFKHLRTLDKRNSNAIYWSPKGRFVVVATVHNQNSSDLDFFDLDFEGEKPEGEKDLTANLQLMNTADHYGITDVEWDPSGRFVATWASAWKHTMENGYHMYDFKGEQLREEAVEKFKQLQWRPRPPTLLAKEEQKQIRKNLREYSRVFEQEDAERIAGADQEVVDNRRRILEDWYEWRESVDVEVDEESAAMGVSSNPAEELLKAKTAEILASGQEEEQVIEEIVEEVLEESEEIVS.

Over residues 1–11 (MAPSYEHLREA) the composition is skewed to basic and acidic residues. The tract at residues 1-20 (MAPSYEHLREADLDEDEFDE) is disordered. The 87-residue stretch at 42–128 (TFVVIDGLPE…HTLRVNKLMD (87 aa)) folds into the RRM domain. 7 WD repeats span residues 195–234 (DRPN…RLGR), 247–294 (PQEN…RSFA), 307–346 (PRKH…LLDK), 349–386 (IKVE…IGSN), 458–500 (TIKD…FFCP), 517–560 (LDKR…EKPE), and 575–620 (ADHY…LREE).

It belongs to the eIF-3 subunit B family. Component of the eukaryotic translation initiation factor 3 (eIF-3) complex.

The protein localises to the cytoplasm. RNA-binding component of the eukaryotic translation initiation factor 3 (eIF-3) complex, which is involved in protein synthesis of a specialized repertoire of mRNAs and, together with other initiation factors, stimulates binding of mRNA and methionyl-tRNAi to the 40S ribosome. The eIF-3 complex specifically targets and initiates translation of a subset of mRNAs involved in cell proliferation. This chain is Eukaryotic translation initiation factor 3 subunit B, found in Pyricularia oryzae (strain 70-15 / ATCC MYA-4617 / FGSC 8958) (Rice blast fungus).